We begin with the raw amino-acid sequence, 123 residues long: Fluoride-specific ion channel FluC (123 aa).

The next 4 membrane-spanning stretches (helical) occupy residues 7 to 27 (LLLIIGGGLGALARYYISGIL), 39 to 59 (LVNSIASFILGYLYGLLFFGF), 67 to 87 (IFLGTGFCGGLSTFSTFSYET), and 100 to 120 (FMNVVANVLVTITLVFLGFIL). Positions 75 and 78 each coordinate Na(+).

Belongs to the fluoride channel Fluc/FEX (TC 1.A.43) family.

It localises to the cell membrane. The enzyme catalyses fluoride(in) = fluoride(out). Na(+) is not transported, but it plays an essential structural role and its presence is essential for fluoride channel function. In terms of biological role, fluoride-specific ion channel. Important for reducing fluoride concentration in the cell, thus reducing its toxicity. The polypeptide is Fluoride-specific ion channel FluC (Pyrococcus abyssi (strain GE5 / Orsay)).